Reading from the N-terminus, the 216-residue chain is Large ribosomal subunit protein uL3 (216 aa).

The tract at residues 132 to 157 (FRGQGASHGTQAVHRKPGSIGGCATP) is disordered.

The protein belongs to the universal ribosomal protein uL3 family. Part of the 50S ribosomal subunit. Forms a cluster with proteins L14 and L19.

Its function is as follows. One of the primary rRNA binding proteins, it binds directly near the 3'-end of the 23S rRNA, where it nucleates assembly of the 50S subunit. The polypeptide is Large ribosomal subunit protein uL3 (Saccharopolyspora erythraea (strain ATCC 11635 / DSM 40517 / JCM 4748 / NBRC 13426 / NCIMB 8594 / NRRL 2338)).